Here is a 721-residue protein sequence, read N- to C-terminus: Polyribonucleotide nucleotidyltransferase (721 aa).

Residues D485 and D491 each contribute to the Mg(2+) site. A KH domain is found at 552–611 (PKIYIVKIHPDKIREIIGPGGKVIRELQAMSNTRIEVDDSGTVKIAASTEEEARIAIKAV). The region spanning 621-689 (GEIYEGEVVR…PEGKIRLSRK (69 aa)) is the S1 motif domain. The disordered stretch occupies residues 687–721 (SRKALLPAPEKGEEDEKSAPRSRRPGGNSDRRNNR).

The protein belongs to the polyribonucleotide nucleotidyltransferase family. Requires Mg(2+) as cofactor.

It localises to the cytoplasm. The enzyme catalyses RNA(n+1) + phosphate = RNA(n) + a ribonucleoside 5'-diphosphate. In terms of biological role, involved in mRNA degradation. Catalyzes the phosphorolysis of single-stranded polyribonucleotides processively in the 3'- to 5'-direction. The polypeptide is Polyribonucleotide nucleotidyltransferase (Desulfosudis oleivorans (strain DSM 6200 / JCM 39069 / Hxd3) (Desulfococcus oleovorans)).